The following is a 30-amino-acid chain: 2S seed storage-like protein (30 aa).

Belongs to the 2S seed storage albumins family. In terms of assembly, the mature protein is a heterodimer of a small and a large chain linked by 2 disulfide bonds. Extracted from castor bean.

Functionally, this is a 2S seed storage protein. Inhibits spore germination in R.solani and F.oxysporum. Exhibits anti-trypsin activity. The polypeptide is 2S seed storage-like protein (Ricinus communis (Castor bean)).